A 326-amino-acid polypeptide reads, in one-letter code: CRISPR-associated endonuclease Cas1 (326 aa).

Glu-191, His-255, and Asp-269 together coordinate Mn(2+).

Belongs to the CRISPR-associated endonuclease Cas1 family. As to quaternary structure, homodimer. Interacts with Cas3, in the absence of crRNA. Requires Mg(2+) as cofactor. The cofactor is Mn(2+).

Functionally, CRISPR (clustered regularly interspaced short palindromic repeat), is an adaptive immune system that provides protection against mobile genetic elements (viruses, transposable elements and conjugative plasmids). CRISPR clusters contain sequences complementary to antecedent mobile elements and target invading nucleic acids. CRISPR clusters are transcribed and processed into CRISPR RNA (crRNA). Acts as a dsDNA endonuclease. Involved in the integration of spacer DNA into the CRISPR cassette. The polypeptide is CRISPR-associated endonuclease Cas1 (Pectobacterium atrosepticum (strain SCRI 1043 / ATCC BAA-672) (Erwinia carotovora subsp. atroseptica)).